We begin with the raw amino-acid sequence, 292 residues long: DCN1-like protein 4 (292 aa).

Positions 43–83 are disordered; the sequence is HQTGSLRSCSSSDCFNKVMPPRKKRRPASGDDLSAKKSRHD. Residues 45–56 show a composition bias toward polar residues; it reads TGSLRSCSSSDC. Residue K95 forms a Glycyl lysine isopeptide (Lys-Gly) (interchain with G-Cter in SUMO2) linkage. The 187-residue stretch at 101 to 287 folds into the DCUN1 domain; the sequence is FSSKRCLEWF…LLDEFVEWYK (187 aa).

In terms of assembly, interacts (via the DCUN1 domain) with the unneddylated cullins: interacts with CUL1, CUL2, CUL3, CUL4A, CUL4B and CUL5; these interactions promote the cullin neddylation and the identity of the cullin dictates the affinity of the interaction. Interacts with RBX1 and RNF7. Interacts with CAND1; this interaction is bridged by cullins such as CUL3 and strongly inhibits the neddylation of CUL3. These CAND-cullin-DCNL complexes can only be neddylated in the presence of a substrate adapter. Interacts (via DCUN1 domain) with UBE2M (N-terminally acetylated form) and probably with UBE2F (N-terminally acetylated form).

It is found in the nucleus. Contributes to the neddylation of all cullins by transferring NEDD8 from N-terminally acetylated NEDD8-conjugating E2s enzyme to different cullin C-terminal domain-RBX complexes which are necessary for the activation of cullin-RING E3 ubiquitin ligases (CRLs). This Homo sapiens (Human) protein is DCN1-like protein 4.